The chain runs to 211 residues: Pyridoxine/pyridoxamine 5'-phosphate oxidase (211 aa).

Substrate is bound by residues 7 to 10 and Lys-65; that span reads RTDY. Residues 60 to 65, 75 to 76, Arg-81, and Lys-82 contribute to the FMN site; these read RIVLIK and FT. Substrate contacts are provided by Tyr-122, Arg-126, and Ser-130. Residues 139 to 140 and Trp-183 contribute to the FMN site; that span reads QS. 189–191 is a binding site for substrate; the sequence is RLH. Arg-193 provides a ligand contact to FMN.

It belongs to the pyridoxamine 5'-phosphate oxidase family. In terms of assembly, homodimer. The cofactor is FMN.

The catalysed reaction is pyridoxamine 5'-phosphate + O2 + H2O = pyridoxal 5'-phosphate + H2O2 + NH4(+). It carries out the reaction pyridoxine 5'-phosphate + O2 = pyridoxal 5'-phosphate + H2O2. It participates in cofactor metabolism; pyridoxal 5'-phosphate salvage; pyridoxal 5'-phosphate from pyridoxamine 5'-phosphate: step 1/1. The protein operates within cofactor metabolism; pyridoxal 5'-phosphate salvage; pyridoxal 5'-phosphate from pyridoxine 5'-phosphate: step 1/1. Its function is as follows. Catalyzes the oxidation of either pyridoxine 5'-phosphate (PNP) or pyridoxamine 5'-phosphate (PMP) into pyridoxal 5'-phosphate (PLP). This is Pyridoxine/pyridoxamine 5'-phosphate oxidase from Herminiimonas arsenicoxydans.